Consider the following 1209-residue polypeptide: Calcium-activated potassium channel subunit alpha-1 (1209 aa).

Residues 1–26 (MANGGGGGGGGSSGSSGGGGGGGGGE) show a composition bias toward gly residues. Disordered regions lie at residues 1-29 (MANGGGGGGGGSSGSSGGGGGGGGGETAL) and 42-64 (LDASSSSSSSSSSSSSSSSSVHE). The Extracellular portion of the chain corresponds to 1–87 (MANGGGGGGG…VPCDSRGQRM (87 aa)). The segment covering 45–61 (SSSSSSSSSSSSSSSSS) has biased composition (low complexity). A helical membrane pass occupies residues 88–108 (WWAFLASSMVTFFGGLFIILL). The Cytoplasmic segment spans residues 109-179 (WRTLKYLWTV…MISAQTLTGR (71 aa)). 3 S-palmitoyl cysteine lipidation sites follow: C119, C120, and C122. A helical transmembrane segment spans residues 180-200 (VLVVLVFALSIGALVIYFIDS). The Extracellular segment spans residues 201–215 (SNPIESCQNFYKDFT). The helical transmembrane segment at 216-236 (LQIDMAFNVFFLLYFGLRFIA) threads the bilayer. At 237 to 240 (ANDK) the chain is on the cytoplasmic side. Residues 241–261 (LWFWLEVNSVVDFFTVPPVFV) form a helical membrane-spanning segment. Over 262–265 (SVYL) the chain is Extracellular. A helical; Voltage-sensor membrane pass occupies residues 266 to 286 (NRSWLGLRFLRALRLIQFSEI). The Cytoplasmic segment spans residues 287-301 (LQFLNILKTSNSIKL). The helical transmembrane segment at 302–322 (VNLLSIFISTWLTAAGFIHLV) threads the bilayer. The Extracellular segment spans residues 323 to 336 (ENSGDPWENFQNNQ). Positions 337 to 359 (ALTYWECVYLLMVTMSTVGYGDV) form an intramembrane region, pore-forming. The short motif at 353 to 356 (TVGY) is the Selectivity for potassium element. Residues 360-368 (YAKTTLGRL) lie on the Extracellular side of the membrane. The chain crosses the membrane as a helical span at residues 369-389 (FMVFFILGGLAMFASYVPEII). Residues 390-1209 (ELIGNRKKYG…DKQKKEMVYR (820 aa)) lie on the Cytoplasmic side of the membrane. An RCK N-terminal 1 domain is found at 408–550 (RKHIVVCGHI…WNWKEGDDAI (143 aa)). Mg(2+) contacts are provided by E440, Q463, and E465. The segment S7 stretch occupies residues 557–577 (LGFIAQSCLAQGLSTMLANLF). A segment S8 region spans residues 614–634 (LSFPTVCELCFVKLKLLMIAI). Residues 682 to 686 (CKACH) are heme-binding motif. Positions 704-734 (EDEQPPTLSPKKKQRNGGMRNSPNTSPKLMR) are disordered. Residue T710 is modified to Phosphothreonine. Phosphoserine occurs at positions 712, 725, and 729. Positions 784–804 (VLSGHVVVCIFGDVSSALIGL) are segment S9. One can recognise an RCK N-terminal 2 domain in the interval 786–930 (SGHVVVCIFG…MDRSSPDNSP (145 aa)). T917 bears the Phosphothreonine mark. A phosphoserine mark is found at S925 and S929. The Calcium bowl motif lies at 977 to 999 (TELVNDTNVQFLDQDDDDDPDTE). Ca(2+) is bound by residues Q986, D989, D992, and D994. The tract at residues 1006–1026 (FACGTAFAVSVLDSLMSATYF) is segment S10. The segment covering 1160–1185 (RASLSHSSHSSQSSSKKSSSVHSIPS) has biased composition (low complexity). A disordered region spans residues 1160–1209 (RASLSHSSHSSQSSSKKSSSVHSIPSTANRPNRPKSRESRDKQKKEMVYR). Residues 1194–1209 (KSRESRDKQKKEMVYR) show a composition bias toward basic and acidic residues. Phosphoserine is present on residues S1195 and S1198.

It belongs to the potassium channel family. Calcium-activated (TC 1.A.1.3) subfamily. KCa1.1/KCNMA1 sub-subfamily. As to quaternary structure, homotetramer; which constitutes the calcium-activated potassium channel. Interacts with beta subunits KCNMB1, KCNMB2, KCNMB3 and KCNMB4. Interacts with gamma subunits LRRC26, LRRC38, LRRC52 and LRRC55. Beta and gamma subunits are accessory, and modulate its activity. Interacts with RAB11B. In terms of processing, phosphorylated. Phosphorylation by kinases such as PKA and/or PKG. In smooth muscles, phosphorylation affects its activity. Post-translationally, palmitoylation by ZDHHC22 and ZDHHC23 within the intracellular linker between the S0 and S1 transmembrane domains regulates localization to the plasma membrane. Depalmitoylated by LYPLA1 and LYPLAL1, leading to retard exit from the trans-Golgi network.

Its subcellular location is the cell membrane. It is found in the endoplasmic reticulum membrane. The catalysed reaction is K(+)(in) = K(+)(out). With respect to regulation, ethanol and carbon monoxide-bound heme increase channel activation. Its activity is regulated as follows. Heme inhibits channel activation. Its function is as follows. Potassium channel activated by both membrane depolarization or increase in cytosolic Ca(2+) that mediates export of K(+). It is also activated by the concentration of cytosolic Mg(2+). Its activation dampens the excitatory events that elevate the cytosolic Ca(2+) concentration and/or depolarize the cell membrane. It therefore contributes to repolarization of the membrane potential. Plays a key role in controlling excitability in a number of systems, such as regulation of the contraction of smooth muscle, the tuning of hair cells in the cochlea, regulation of transmitter release, and innate immunity. In smooth muscles, its activation by high level of Ca(2+), caused by ryanodine receptors in the sarcoplasmic reticulum, regulates the membrane potential. In cochlea cells, its number and kinetic properties partly determine the characteristic frequency of each hair cell and thereby helps to establish a tonotopic map. Kinetics of KCNMA1 channels are determined by alternative splicing, phosphorylation status and its combination with modulating beta subunits. Highly sensitive to both iberiotoxin (IbTx) and charybdotoxin (CTX). Potassium channel activated by both membrane depolarization or increase in cytosolic Ca(2+) that mediates export of K(+). The protein is Calcium-activated potassium channel subunit alpha-1 (Kcnma1) of Rattus norvegicus (Rat).